The primary structure comprises 715 residues: Fatty acid oxidation complex subunit alpha (715 aa).

Residues 1 to 190 are enoyl-CoA hydratase; that stretch reads MTTTSAFMLN…KAGLVDDVVP (190 aa). The interval 306 to 715 is 3-hydroxyacyl-CoA dehydrogenase; the sequence is GPLNSVGILG…WTNGETDQGN (410 aa).

It in the N-terminal section; belongs to the enoyl-CoA hydratase/isomerase family. This sequence in the central section; belongs to the 3-hydroxyacyl-CoA dehydrogenase family. As to quaternary structure, heterotetramer of two alpha chains (FadJ) and two beta chains (FadI).

It is found in the cytoplasm. It catalyses the reaction a (3S)-3-hydroxyacyl-CoA = a (2E)-enoyl-CoA + H2O. The enzyme catalyses a 4-saturated-(3S)-3-hydroxyacyl-CoA = a (3E)-enoyl-CoA + H2O. The catalysed reaction is a (3S)-3-hydroxyacyl-CoA + NAD(+) = a 3-oxoacyl-CoA + NADH + H(+). It carries out the reaction (3S)-3-hydroxybutanoyl-CoA = (3R)-3-hydroxybutanoyl-CoA. It functions in the pathway lipid metabolism; fatty acid beta-oxidation. Functionally, catalyzes the formation of a hydroxyacyl-CoA by addition of water on enoyl-CoA. Also exhibits 3-hydroxyacyl-CoA epimerase and 3-hydroxyacyl-CoA dehydrogenase activities. This chain is Fatty acid oxidation complex subunit alpha, found in Salmonella gallinarum (strain 287/91 / NCTC 13346).